Consider the following 229-residue polypeptide: Acetylcholine-binding protein (229 aa).

The N-terminal stretch at 1–19 (MRRNIFCLACLWIVQACLS) is a signal peptide. Asparagine 85 carries N-linked (GlcNAc...) asparagine glycosylation. Residues 114–217 (PEVLTPQLAR…PEAYEDVEVS (104 aa)) enclose the Ig-like domain. Cysteine 142 and cysteine 155 are disulfide-bonded.

Homopentamer. N-glycosylated. Expressed by glial cells.

The protein localises to the synaptic cleft. Binds to acetylcholine. Modulates neuronal synaptic transmission. This chain is Acetylcholine-binding protein, found in Lymnaea stagnalis (Great pond snail).